The primary structure comprises 57 residues: Catalase-1 (57 aa).

Residue Y37 participates in heme binding.

In terms of assembly, homodimer. Heme is required as a cofactor.

The enzyme catalyses 2 H2O2 = O2 + 2 H2O. In terms of biological role, decomposes hydrogen peroxide into water and oxygen; serves to protect cells from the toxic effects of hydrogen peroxide. This is Catalase-1 from Comamonas terrigena.